A 287-amino-acid polypeptide reads, in one-letter code: Probable WRKY transcription factor 57 (287 aa).

A compositionally biased stretch (low complexity) spans 86-99 (TSTNNNPSATSSSS). The tract at residues 86–137 (TSTNNNPSATSSSSEDPAENSTASAEKTPPPETPVKEKKKAQKRIRQPRFAF) is disordered. Positions 122 to 132 (EKKKAQKRIRQ) are enriched in basic residues. The WRKY DNA-binding region spans 141–206 (SDVDNLEDGY…YEGQHCHQTI (66 aa)). Residues 248 to 287 (DNNAPSPRLPRPTTEDTPAVSTPSEEGLLGDIVPQTMRNP) form a disordered region. A compositionally biased stretch (polar residues) spans 262–271 (EDTPAVSTPS).

This sequence belongs to the WRKY group II-c family.

The protein localises to the nucleus. Transcription factor. Interacts specifically with the W box (5'-(T)TGAC[CT]-3'), a frequently occurring elicitor-responsive cis-acting element. The chain is Probable WRKY transcription factor 57 (WRKY57) from Arabidopsis thaliana (Mouse-ear cress).